We begin with the raw amino-acid sequence, 228 residues long: Putative N-acetylmannosamine-6-phosphate 2-epimerase (228 aa).

The protein belongs to the NanE family.

The enzyme catalyses an N-acyl-D-glucosamine 6-phosphate = an N-acyl-D-mannosamine 6-phosphate. It participates in amino-sugar metabolism; N-acetylneuraminate degradation; D-fructose 6-phosphate from N-acetylneuraminate: step 3/5. In terms of biological role, converts N-acetylmannosamine-6-phosphate (ManNAc-6-P) to N-acetylglucosamine-6-phosphate (GlcNAc-6-P). This is Putative N-acetylmannosamine-6-phosphate 2-epimerase from Lactiplantibacillus plantarum (strain ATCC BAA-793 / NCIMB 8826 / WCFS1) (Lactobacillus plantarum).